The primary structure comprises 206 residues: MSKGSSTKKWLHEHTSDYYVIQANKLGYRSRASFKILEIQDKYQLFKPNMFVVDLGASPGGWSEQVIKYIGKNGKLIALDLLEMAPIAGVEFIQGDFSSDETYQKLNTLVNNQKIDCVISDMAPNLSGNKTSDQAKSIYLLELALDFANTNLNKNGSFVAKVFQGQGSDEYLKLVRESFNKVIQFKPKSSRAKSREFYVIATEFKG.

S-adenosyl-L-methionine contacts are provided by G60, W62, D80, D96, and D121. The active-site Proton acceptor is K161.

Belongs to the class I-like SAM-binding methyltransferase superfamily. RNA methyltransferase RlmE family.

Its subcellular location is the cytoplasm. It catalyses the reaction uridine(2552) in 23S rRNA + S-adenosyl-L-methionine = 2'-O-methyluridine(2552) in 23S rRNA + S-adenosyl-L-homocysteine + H(+). In terms of biological role, specifically methylates the uridine in position 2552 of 23S rRNA at the 2'-O position of the ribose in the fully assembled 50S ribosomal subunit. This chain is Ribosomal RNA large subunit methyltransferase E, found in Francisella tularensis subsp. holarctica (strain FTNF002-00 / FTA).